Consider the following 502-residue polypeptide: Probable cytosol aminopeptidase (502 aa).

2 residues coordinate Mn(2+): Lys-254 and Asp-259. The active site involves Lys-266. Asp-277, Asp-336, and Glu-338 together coordinate Mn(2+). Arg-340 is an active-site residue.

The protein belongs to the peptidase M17 family. Mn(2+) serves as cofactor.

It localises to the cytoplasm. The enzyme catalyses Release of an N-terminal amino acid, Xaa-|-Yaa-, in which Xaa is preferably Leu, but may be other amino acids including Pro although not Arg or Lys, and Yaa may be Pro. Amino acid amides and methyl esters are also readily hydrolyzed, but rates on arylamides are exceedingly low.. It catalyses the reaction Release of an N-terminal amino acid, preferentially leucine, but not glutamic or aspartic acids.. Functionally, presumably involved in the processing and regular turnover of intracellular proteins. Catalyzes the removal of unsubstituted N-terminal amino acids from various peptides. This is Probable cytosol aminopeptidase from Tropheryma whipplei (strain TW08/27) (Whipple's bacillus).